A 37-amino-acid chain; its full sequence is Photosystem I reaction center subunit IX (37 aa).

A helical transmembrane segment spans residues 4-24 (FLSSAPVLLTAMMVFTAGLLI).

It belongs to the PsaJ family.

It localises to the cellular thylakoid membrane. Functionally, may help in the organization of the PsaE and PsaF subunits. This Picosynechococcus sp. (strain ATCC 27264 / PCC 7002 / PR-6) (Agmenellum quadruplicatum) protein is Photosystem I reaction center subunit IX.